The primary structure comprises 277 residues: Polyamine aminopropyltransferase (277 aa).

Residues 2–235 (ELWFTENQDE…SLWTFTMGSK (234 aa)) form the PABS domain. Residue Gln31 coordinates S-methyl-5'-thioadenosine. Residues His62 and Asp86 each contribute to the spermidine site. S-methyl-5'-thioadenosine-binding positions include Glu106 and 137–138 (DG). The active-site Proton acceptor is the Asp155. 155–158 (DSTD) serves as a coordination point for spermidine. Residue Pro162 coordinates S-methyl-5'-thioadenosine.

Belongs to the spermidine/spermine synthase family. In terms of assembly, homodimer or homotetramer.

It localises to the cytoplasm. The catalysed reaction is S-adenosyl 3-(methylsulfanyl)propylamine + putrescine = S-methyl-5'-thioadenosine + spermidine + H(+). Its pathway is amine and polyamine biosynthesis; spermidine biosynthesis; spermidine from putrescine: step 1/1. Catalyzes the irreversible transfer of a propylamine group from the amino donor S-adenosylmethioninamine (decarboxy-AdoMet) to putrescine (1,4-diaminobutane) to yield spermidine. The chain is Polyamine aminopropyltransferase from Thermoanaerobacter pseudethanolicus (strain ATCC 33223 / 39E) (Clostridium thermohydrosulfuricum).